The following is a 119-amino-acid chain: Flagellar transcriptional regulator FlhD (119 aa).

The protein belongs to the FlhD family. In terms of assembly, homodimer; disulfide-linked. Forms a heterohexamer composed of two FlhC and four FlhD subunits. Each FlhC binds a FlhD dimer, forming a heterotrimer, and a hexamer assembles by dimerization of two heterotrimers.

The protein resides in the cytoplasm. Functionally, functions in complex with FlhC as a master transcriptional regulator that regulates transcription of several flagellar and non-flagellar operons by binding to their promoter region. Activates expression of class 2 flagellar genes, including fliA, which is a flagellum-specific sigma factor that turns on the class 3 genes. Also regulates genes whose products function in a variety of physiological pathways. The chain is Flagellar transcriptional regulator FlhD from Yersinia enterocolitica.